Consider the following 368-residue polypeptide: Cyanide hydratase (368 aa).

Residues 6-285 (YKAAVVTSEP…DGLMYVDIDL (280 aa)) enclose the CN hydrolase domain. Residue Glu-46 is the Proton acceptor of the active site. Lys-128 is a catalytic residue. The active-site Nucleophile is the Cys-163. The segment at 341–368 (LDRPLEEEDYRQGTDAGETEKASSNGHA) is disordered.

The protein belongs to the carbon-nitrogen hydrolase superfamily. Nitrilase family. Oligomer of dimers, forming left-handed helical fibers.

The enzyme catalyses formamide = hydrogen cyanide + H2O. Catalyzes the hydration of cyanide to formamide. Degradation of cyanide may be important for plant pathogenic fungi in infection of cyanogenic plants. The protein is Cyanide hydratase of Microdochium sorghi (Zonate leaf spot disease fungus).